The chain runs to 424 residues: Histidine--tRNA ligase (424 aa).

The protein belongs to the class-II aminoacyl-tRNA synthetase family. In terms of assembly, homodimer.

The protein resides in the cytoplasm. The catalysed reaction is tRNA(His) + L-histidine + ATP = L-histidyl-tRNA(His) + AMP + diphosphate + H(+). In Sodalis glossinidius (strain morsitans), this protein is Histidine--tRNA ligase.